Consider the following 247-residue polypeptide: C-X-C motif chemokine 16 (247 aa).

A signal peptide spans 1 to 26 (MRRGFGPLALTLFLFFFALLTLPGDG). Residues 27–198 (NQGSVAGSCY…EPGAGAGTQA (172 aa)) are Extracellular-facing. Disulfide bonds link Cys35/Cys65 and Cys37/Cys79. The segment at 120–152 (IPEATEGKPPDTSTAVQFQSTQQSTFPSGAPSL) is disordered. Residues 131 to 147 (TSTAVQFQSTQQSTFPS) are compositionally biased toward low complexity. A helical membrane pass occupies residues 199-219 (LVPVLSLLAIVFFLVAAMVCV). The Cytoplasmic portion of the chain corresponds to 220 to 247 (LCNRRVTRQSSSGLQLCYTPVEPRPQGL).

This sequence belongs to the intercrine alpha (chemokine CxC) family. In terms of processing, glycosylated.

It is found in the membrane. Functionally, induces a strong chemotactic response. Induces calcium mobilization. Binds to CXCR6/Bonzo. Also acts as a scavenger receptor on macrophages, which specifically binds to OxLDL (oxidized low density lipoprotein), suggesting that it may be involved in pathophysiology such as atherogenesis. This is C-X-C motif chemokine 16 (Cxcl16) from Rattus norvegicus (Rat).